The following is a 188-amino-acid chain: dCTP deaminase (188 aa).

DCTP is bound by residues 111 to 116 (KSTYAR), 135 to 137 (TLE), Gln156, Tyr170, and Gln180. Glu137 (proton donor/acceptor) is an active-site residue.

Belongs to the dCTP deaminase family. In terms of assembly, homotrimer.

It carries out the reaction dCTP + H2O + H(+) = dUTP + NH4(+). It functions in the pathway pyrimidine metabolism; dUMP biosynthesis; dUMP from dCTP (dUTP route): step 1/2. Catalyzes the deamination of dCTP to dUTP. The chain is dCTP deaminase from Ralstonia pickettii (strain 12J).